A 395-amino-acid chain; its full sequence is Protein UNIFOLIATA (395 aa).

Disordered stretches follow at residues 147–170 (SQEG…GGGS) and 185–223 (QIRR…GERQ). The segment covering 202–211 (EEGEEEEEDN) has biased composition (acidic residues). 3 DNA-binding regions span residues 224–228 (REHPF), 293–300 (NKPKMRHY), and 364–367 (YGPT).

Belongs to the FLO/LFY family. As to expression, highly expressed in leaf, leaflet, inflorescence and lateral shoot primordia on the main shoot axis, and in floral organ and carpel primordia.

The protein localises to the nucleus. Its function is as follows. May regulate indeterminacy during leaf and flower development. The protein is Protein UNIFOLIATA (UNI) of Pisum sativum (Garden pea).